Consider the following 349-residue polypeptide: Inositol 2-dehydrogenase (349 aa).

This sequence belongs to the Gfo/Idh/MocA family. As to quaternary structure, homotetramer.

It catalyses the reaction myo-inositol + NAD(+) = scyllo-inosose + NADH + H(+). In terms of biological role, involved in the oxidation of myo-inositol (MI) to 2-keto-myo-inositol (2KMI or 2-inosose). In Mycolicibacterium gilvum (strain PYR-GCK) (Mycobacterium gilvum (strain PYR-GCK)), this protein is Inositol 2-dehydrogenase.